We begin with the raw amino-acid sequence, 264 residues long: Shikimate dehydrogenase (NADP(+)) (264 aa).

Residues 14 to 16 and Thr59 each bind shikimate; that span reads SLS. Lys63 serves as the catalytic Proton acceptor. Position 75 (Glu75) interacts with NADP(+). Residues Asn84 and Asp99 each coordinate shikimate. Residues 122–126, 144–149, and Ile205 contribute to the NADP(+) site; these read GAGGA and NRTPSK. A shikimate-binding site is contributed by Tyr207. An NADP(+)-binding site is contributed by Gly228.

This sequence belongs to the shikimate dehydrogenase family. In terms of assembly, homodimer.

The enzyme catalyses shikimate + NADP(+) = 3-dehydroshikimate + NADPH + H(+). Its pathway is metabolic intermediate biosynthesis; chorismate biosynthesis; chorismate from D-erythrose 4-phosphate and phosphoenolpyruvate: step 4/7. Its function is as follows. Involved in the biosynthesis of the chorismate, which leads to the biosynthesis of aromatic amino acids. Catalyzes the reversible NADPH linked reduction of 3-dehydroshikimate (DHSA) to yield shikimate (SA). This chain is Shikimate dehydrogenase (NADP(+)), found in Pyrococcus abyssi (strain GE5 / Orsay).